A 323-amino-acid polypeptide reads, in one-letter code: Voltage-dependent calcium channel gamma-2 subunit (323 aa).

A helical transmembrane segment spans residues 10 to 30 (MLLTTVGAFAAFSLMTIAVGT). N-linked (GlcNAc...) asparagine glycosylation is present at asparagine 48. The next 3 membrane-spanning stretches (helical) occupy residues 104-124 (SSIFPILSVILLFMGGLCIAA), 134-154 (IILSAGIFFVSAGLSNIIGII), and 182-202 (FGALSFIIAEMVGVLAVHMFI). The interval 233–261 (YQRRSRSSSRSTEPSHSRDASPVGVKGFN) is disordered. Serine 253 carries the post-translational modification Phosphoserine. Residue tyrosine 271 is modified to Phosphotyrosine. A Phosphothreonine; by PKA modification is found at threonine 321.

This sequence belongs to the PMP-22/EMP/MP20 family. CACNG subfamily. The L-type calcium channel is composed of five subunits: alpha-1, alpha-2/delta, beta and gamma. Interacts with the PDZ domains of DLG4/PSD-95 and DLG1/SAP97. May interact with GOPC. Acts as an auxiliary subunit for AMPA-selective glutamate receptors (AMPARs). Found in a complex with GRIA1, GRIA2, GRIA3, GRIA4, CNIH2, CNIH3, CACNG3, CACNG4, CACNG5, CACNG7 and CACNG8. Interacts with GRIA1 and GRIA2. Interacts with MPP2. Post-translationally, phosphorylation of Thr-321 by PKA impairs interaction with DLG1 and DLG4. In terms of tissue distribution, brain.

It is found in the membrane. The protein localises to the synapse. Its subcellular location is the synaptosome. In terms of biological role, regulates the trafficking and gating properties of AMPA-selective glutamate receptors (AMPARs). Promotes their targeting to the cell membrane and synapses and modulates their gating properties by slowing their rates of activation, deactivation and desensitization. Does not show subunit-specific AMPA receptor regulation and regulates all AMPAR subunits. Thought to stabilize the calcium channel in an inactivated (closed) state. The protein is Voltage-dependent calcium channel gamma-2 subunit (Cacng2) of Mus musculus (Mouse).